The following is a 258-amino-acid chain: Diacetyl reductase [(S)-acetoin forming] (258 aa).

Residue 8–32 participates in NAD(+) binding; sequence LVTGGAQGIGFKIAERLVEDGFKVA. Position 141 (S141) interacts with substrate. Y154 (proton acceptor) is an active-site residue. K158 is an active-site residue.

Belongs to the short-chain dehydrogenases/reductases (SDR) family.

The enzyme catalyses (S)-acetoin + NAD(+) = diacetyl + NADH + H(+). Its function is as follows. Catalyzes the irreversible reduction of 2,3-butanediol to (S)-acetoin in the presence of NADH. The sequence is that of Diacetyl reductase [(S)-acetoin forming] (butA) from Staphylococcus aureus (strain Mu50 / ATCC 700699).